We begin with the raw amino-acid sequence, 525 residues long: Cytochrome P450 750A1 (525 aa).

The chain crosses the membrane as a helical span at residues 13–33; the sequence is PLPLPAILIATFIFFFSCWIL. Cys465 lines the heme pocket.

The protein belongs to the cytochrome P450 family. Heme serves as cofactor.

It localises to the membrane. This is Cytochrome P450 750A1 (CYP750A1) from Pinus taeda (Loblolly pine).